Here is a 210-residue protein sequence, read N- to C-terminus: Redox-sensing transcriptional repressor Rex (210 aa).

The H-T-H motif DNA-binding region spans 17-56 (KYHRYLNELMKNDVDRISSKELGEKIGFTASQIRQDLNCF). 91–96 (GAGNIG) is a binding site for NAD(+).

This sequence belongs to the transcriptional regulatory Rex family. In terms of assembly, homodimer.

Its subcellular location is the cytoplasm. Its function is as follows. Modulates transcription in response to changes in cellular NADH/NAD(+) redox state. The protein is Redox-sensing transcriptional repressor Rex of Clostridium botulinum (strain Alaska E43 / Type E3).